A 67-amino-acid polypeptide reads, in one-letter code: uncharacterized protein (67 aa).

A helical transmembrane segment spans residues 4 to 24 (WIFAILMLGVAIVLSIIATFF).

Its subcellular location is the membrane. This is an uncharacterized protein from Bacillus anthracis.